A 299-amino-acid chain; its full sequence is GTP cyclohydrolase FolE2 (299 aa).

It belongs to the GTP cyclohydrolase IV family.

It catalyses the reaction GTP + H2O = 7,8-dihydroneopterin 3'-triphosphate + formate + H(+). Its pathway is cofactor biosynthesis; 7,8-dihydroneopterin triphosphate biosynthesis; 7,8-dihydroneopterin triphosphate from GTP: step 1/1. Its function is as follows. Converts GTP to 7,8-dihydroneopterin triphosphate. The chain is GTP cyclohydrolase FolE2 from Klebsiella pneumoniae.